We begin with the raw amino-acid sequence, 152 residues long: Deoxyuridine 5'-triphosphate nucleotidohydrolase (152 aa).

Substrate-binding positions include 71 to 73 (RSG), Asn-84, 88 to 90 (LID), and Met-98.

It belongs to the dUTPase family. Mg(2+) is required as a cofactor.

It carries out the reaction dUTP + H2O = dUMP + diphosphate + H(+). Its pathway is pyrimidine metabolism; dUMP biosynthesis; dUMP from dCTP (dUTP route): step 2/2. Its function is as follows. This enzyme is involved in nucleotide metabolism: it produces dUMP, the immediate precursor of thymidine nucleotides and it decreases the intracellular concentration of dUTP so that uracil cannot be incorporated into DNA. In Shewanella pealeana (strain ATCC 700345 / ANG-SQ1), this protein is Deoxyuridine 5'-triphosphate nucleotidohydrolase.